Reading from the N-terminus, the 454-residue chain is Nuclear envelope integral membrane protein (454 aa).

The first 18 residues, 1–18 (MHSAGLLMLTVAGYFTSG), serve as a signal peptide directing secretion. Asn38 is a glycosylation site (N-linked (GlcNAc...) asparagine). 5 consecutive transmembrane segments (helical) span residues 138-158 (IPLD…LFSA), 166-186 (VFYY…VVIY), 197-217 (MMYG…KQLA), 231-251 (VLGY…RIGP), and 280-300 (TSAV…PISW). The span at 388 to 405 (SMDAAPEEESVEEPEEDK) shows a compositional bias: acidic residues. Residues 388 to 454 (SMDAAPEEES…QEVDLRQVVQ (67 aa)) are disordered. Over residues 414-424 (NSQFRYQQAAR) the composition is skewed to polar residues. Residues 428-446 (PEPESESDDSEEEEFFEQE) are compositionally biased toward acidic residues.

Belongs to the NEMP family. As to quaternary structure, interacts with OTE. In terms of tissue distribution, expressed in both germline and somatic cells in the larval testis and prepupal ovary (at protein level). Also detected in the larval eye and larval wing disk (at protein level).

It localises to the nucleus inner membrane. Its function is as follows. Contributes to nuclear envelope stiffness in germ cells. Required for male and female fertility. This Drosophila melanogaster (Fruit fly) protein is Nuclear envelope integral membrane protein.